Reading from the N-terminus, the 475-residue chain is Zinc-regulated GTPase metalloprotein activator 1 (475 aa).

A GTP-binding site is contributed by G50–T57. Zn(2+) is bound by residues C116, C118, and C119. Positions C116–C119 match the CXCC motif motif. GTP-binding positions include C119–E123 and N229–D232. In terms of domain architecture, CobW C-terminal spans I302–L420. The stretch at I440–K467 forms a coiled coil. The span at E445–Y460 shows a compositional bias: acidic residues. The disordered stretch occupies residues E445–K475. Basic and acidic residues predominate over residues K461 to K475.

It belongs to the SIMIBI class G3E GTPase family. ZNG1 subfamily.

It carries out the reaction GTP + H2O = GDP + phosphate + H(+). In terms of biological role, zinc chaperone that directly transfers zinc cofactor to target metalloproteins, thereby activating them. Zinc is transferred from the CXCC motif in the GTPase domain to the zinc binding site in target proteins in a process requiring GTP hydrolysis. In Dictyostelium discoideum (Social amoeba), this protein is Zinc-regulated GTPase metalloprotein activator 1.